The following is an 83-amino-acid chain: Colicin-E5 immunity protein (83 aa).

This protein is able to protect a cell, which harbors the plasmid ColE5 encoding colicin E5, against colicin E5. This is Colicin-E5 immunity protein (imm) from Escherichia coli.